The sequence spans 302 residues: Probable WRKY transcription factor 40 (302 aa).

The WRKY DNA-binding region spans 140–206 (DTTLVVKDGY…YEGEHNHPMP (67 aa)).

Belongs to the WRKY group III family.

Its subcellular location is the nucleus. Functionally, transcription factor. Interacts specifically with the W box (5'-(T)TGAC[CT]-3'), a frequently occurring elicitor-responsive cis-acting element. This is Probable WRKY transcription factor 40 from Arabidopsis thaliana (Mouse-ear cress).